A 207-amino-acid chain; its full sequence is Pyridoxine/pyridoxamine 5'-phosphate oxidase (207 aa).

Residues 53–58, 68–69, K75, and Q97 contribute to the FMN site; these read RMVLLK and YT. A substrate-binding site is contributed by K58. Residues Y115, R119, and S123 each coordinate substrate. Residues 132–133 and W177 contribute to the FMN site; that span reads QS. 183–185 contributes to the substrate binding site; the sequence is RLH. FMN is bound at residue R187.

The protein belongs to the pyridoxamine 5'-phosphate oxidase family. In terms of assembly, homodimer. FMN serves as cofactor.

The catalysed reaction is pyridoxamine 5'-phosphate + O2 + H2O = pyridoxal 5'-phosphate + H2O2 + NH4(+). It carries out the reaction pyridoxine 5'-phosphate + O2 = pyridoxal 5'-phosphate + H2O2. It functions in the pathway cofactor metabolism; pyridoxal 5'-phosphate salvage; pyridoxal 5'-phosphate from pyridoxamine 5'-phosphate: step 1/1. The protein operates within cofactor metabolism; pyridoxal 5'-phosphate salvage; pyridoxal 5'-phosphate from pyridoxine 5'-phosphate: step 1/1. Functionally, catalyzes the oxidation of either pyridoxine 5'-phosphate (PNP) or pyridoxamine 5'-phosphate (PMP) into pyridoxal 5'-phosphate (PLP). The protein is Pyridoxine/pyridoxamine 5'-phosphate oxidase of Bartonella henselae (strain ATCC 49882 / DSM 28221 / CCUG 30454 / Houston 1) (Rochalimaea henselae).